The chain runs to 238 residues: Zinc import ATP-binding protein ZnuC (238 aa).

The ABC transporter domain occupies 5-220; the sequence is ITLKNIHVSF…LEFISIFGLK (216 aa). 37–44 provides a ligand contact to ATP; sequence GPNGAGKS.

The protein belongs to the ABC transporter superfamily. Zinc importer (TC 3.A.1.15.5) family. In terms of assembly, the complex is composed of two ATP-binding proteins (ZnuC), two transmembrane proteins (ZnuB) and a solute-binding protein (ZnuA).

Its subcellular location is the cell inner membrane. The catalysed reaction is Zn(2+)(out) + ATP(in) + H2O(in) = Zn(2+)(in) + ADP(in) + phosphate(in) + H(+)(in). Functionally, part of the ABC transporter complex ZnuABC involved in zinc import. Responsible for energy coupling to the transport system. The polypeptide is Zinc import ATP-binding protein ZnuC (Buchnera aphidicola subsp. Schizaphis graminum (strain Sg)).